The sequence spans 45 residues: DNA-directed RNA polymerase subunit Rpo12 (45 aa).

Zn(2+) is bound by residues C8, C23, and C26.

This sequence belongs to the archaeal Rpo12/eukaryotic RPC10 RNA polymerase subunit family. As to quaternary structure, part of the RNA polymerase complex. Zn(2+) is required as a cofactor.

Its subcellular location is the cytoplasm. It carries out the reaction RNA(n) + a ribonucleoside 5'-triphosphate = RNA(n+1) + diphosphate. Functionally, DNA-dependent RNA polymerase (RNAP) catalyzes the transcription of DNA into RNA using the four ribonucleoside triphosphates as substrates. This is DNA-directed RNA polymerase subunit Rpo12 from Methanosarcina acetivorans (strain ATCC 35395 / DSM 2834 / JCM 12185 / C2A).